Reading from the N-terminus, the 167-residue chain is NAD(P)H-quinone oxidoreductase subunit I, chloroplastic (167 aa).

2 4Fe-4S ferredoxin-type domains span residues 55–84 (GRIH…VDWK) and 95–124 (LNYS…MTEE). Positions 64, 67, 70, 74, 104, 107, 110, and 114 each coordinate [4Fe-4S] cluster.

The protein belongs to the complex I 23 kDa subunit family. As to quaternary structure, NDH is composed of at least 16 different subunits, 5 of which are encoded in the nucleus. It depends on [4Fe-4S] cluster as a cofactor.

It localises to the plastid. The protein resides in the chloroplast thylakoid membrane. It catalyses the reaction a plastoquinone + NADH + (n+1) H(+)(in) = a plastoquinol + NAD(+) + n H(+)(out). It carries out the reaction a plastoquinone + NADPH + (n+1) H(+)(in) = a plastoquinol + NADP(+) + n H(+)(out). NDH shuttles electrons from NAD(P)H:plastoquinone, via FMN and iron-sulfur (Fe-S) centers, to quinones in the photosynthetic chain and possibly in a chloroplast respiratory chain. The immediate electron acceptor for the enzyme in this species is believed to be plastoquinone. Couples the redox reaction to proton translocation, and thus conserves the redox energy in a proton gradient. This is NAD(P)H-quinone oxidoreductase subunit I, chloroplastic from Draba nemorosa (Woodland whitlowgrass).